A 239-amino-acid chain; its full sequence is Ribosomal RNA small subunit methyltransferase G (239 aa).

S-adenosyl-L-methionine-binding positions include G79, F84, 130–131 (AE), and R149.

It belongs to the methyltransferase superfamily. RNA methyltransferase RsmG family.

The protein localises to the cytoplasm. Its function is as follows. Specifically methylates the N7 position of a guanine in 16S rRNA. This Lactobacillus delbrueckii subsp. bulgaricus (strain ATCC BAA-365 / Lb-18) protein is Ribosomal RNA small subunit methyltransferase G.